The primary structure comprises 302 residues: MKTVRLRAAAKINLYLEILGVRPDNFHELVMVLQSVDLADTVTLRAAPTTRVSCSHPLVPNDRTNLAVRAVEVLQKHTGIDEGVEIVIEKRIPVASGLAGGSTDAAAVLAGLNVLWDLGLTQRQLQSLGAQIGSDIPFCVTGGTALAMGRGEVLSPLPALKGVYLVLAKLADLQVSTAWAYQTYRREYLSEGTAPRARTSALLSAVASQEVARIAPLLHNDLERAVLPAYPQVSALREHLVSAGALGAMMSGSGPAVFGLARDRAHAEAVCAVLAGEPGLELFVCKTQQAGILMEESESSDL.

Lysine 11 is a catalytic residue. Residue 93–103 (PVASGLAGGST) coordinates ATP. The active site involves aspartate 135.

It belongs to the GHMP kinase family. IspE subfamily.

It carries out the reaction 4-CDP-2-C-methyl-D-erythritol + ATP = 4-CDP-2-C-methyl-D-erythritol 2-phosphate + ADP + H(+). Its pathway is isoprenoid biosynthesis; isopentenyl diphosphate biosynthesis via DXP pathway; isopentenyl diphosphate from 1-deoxy-D-xylulose 5-phosphate: step 3/6. Functionally, catalyzes the phosphorylation of the position 2 hydroxy group of 4-diphosphocytidyl-2C-methyl-D-erythritol. This chain is 4-diphosphocytidyl-2-C-methyl-D-erythritol kinase, found in Gloeobacter violaceus (strain ATCC 29082 / PCC 7421).